Reading from the N-terminus, the 187-residue chain is Inosine triphosphate pyrophosphatase (187 aa).

Residue 11–16 (TSNKNK) participates in ITP binding. Glutamate 39 contacts Mg(2+). ITP contacts are provided by residues lysine 51, 67–68 (DT), lysine 84, 143–146 (FGWD), lysine 164, and 169–170 (HR).

It belongs to the HAM1 NTPase family. As to quaternary structure, homodimer. Mg(2+) is required as a cofactor. Requires Mn(2+) as cofactor.

Its subcellular location is the cytoplasm. The protein localises to the nucleus. It carries out the reaction ITP + H2O = IMP + diphosphate + H(+). The catalysed reaction is dITP + H2O = dIMP + diphosphate + H(+). The enzyme catalyses XTP + H2O = XMP + diphosphate + H(+). In terms of biological role, pyrophosphatase that hydrolyzes non-canonical purine nucleotides such as inosine triphosphate (ITP), deoxyinosine triphosphate (dITP) or xanthosine 5'-triphosphate (XTP) to their respective monophosphate derivatives. The enzyme does not distinguish between the deoxy- and ribose forms. Probably excludes non-canonical purines from RNA and DNA precursor pools, thus preventing their incorporation into RNA and DNA and avoiding chromosomal lesions. The protein is Inosine triphosphate pyrophosphatase of Aspergillus fumigatus (strain ATCC MYA-4609 / CBS 101355 / FGSC A1100 / Af293) (Neosartorya fumigata).